A 205-amino-acid polypeptide reads, in one-letter code: MADDEVIRKRLLIDGEGVGDDRRITTLMKTFVKWCNSTDDDNDASYQKLLAQLAQCEFAMGKTEMVHAMNERETENYEKAYKEVEQSITHAYEEIATCKTNLQEAKRIRRNKQEYDALAKEITKHPERQETTRQISELEKDLNSLTETKESLVSKLELRKKQFYLLINTIHELQRMIDDEKTDEGTALSPQQSITSPGKVALMDT.

Positions 68–158 form a coiled coil; that stretch reads AMNERETENY…KESLVSKLEL (91 aa). The disordered stretch occupies residues 181–205; that stretch reads KTDEGTALSPQQSITSPGKVALMDT.

It belongs to the THOC7 family. Component of the THO subcomplex of the transcription/export (TREX) complex which seems to have a dynamic structure involving ATP-dependent remodeling.

The protein localises to the cytoplasm. The protein resides in the nucleus. It localises to the nucleus speckle. May act as component of the THO subcomplex of the TREX complex which is thought to couple mRNA transcription, processing and nuclear export, and which specifically associates with spliced mRNA and not with unspliced pre-mRNA. This is THO complex subunit 7 homolog (thoc7) from Nematostella vectensis (Starlet sea anemone).